The sequence spans 148 residues: Snaclec B3/B5 (148 aa).

The signal sequence occupies residues 1–24 (MGRFIFVSFGLLVVFLSLSGTGAA). Intrachain disulfides connect Cys-27–Cys-38, Cys-55–Cys-144, and Cys-121–Cys-136. The 112-residue stretch at 34–145 (YDQHCYKVFD…CRLLGHFVCK (112 aa)) folds into the C-type lectin domain.

The protein belongs to the snaclec family. In terms of assembly, heterodimer; disulfide-linked. As to expression, expressed by the venom gland.

It is found in the secreted. Its function is as follows. Interferes with one step of hemostasis (modulation of platelet aggregation, or coagulation cascade, for example). The protein is Snaclec B3/B5 of Macrovipera lebetinus (Levantine viper).